The chain runs to 286 residues: L-cysteine S-thiosulfotransferase subunit SoxA (286 aa).

Positions 1 to 26 (MTVSKRFLAPVFAMVGGLVLAFSANA) are cleaved as a signal peptide. One can recognise a Cytochrome c domain in the interval 80-166 (LAVERGADIW…ALTSYIKHQS (87 aa)). Positions 100, 103, 104, 138, 202, 205, and 206 each coordinate heme. Arg-243 contributes to the substrate binding site. Cys-247 contributes to the heme binding site. Cys-247 functions as the Cysteine persulfide intermediate in the catalytic mechanism.

Belongs to the SoxA family. In terms of assembly, heterodimer of SoxA and SoxX. It depends on heme as a cofactor. Cysteine persulfide at Cys-247.

The protein resides in the periplasm. The catalysed reaction is L-cysteinyl-[SoxY protein] + thiosulfate + 2 Fe(III)-[cytochrome c] = S-sulfosulfanyl-L-cysteinyl-[SoxY protein] + 2 Fe(II)-[cytochrome c] + 2 H(+). It catalyses the reaction S-sulfanyl-L-cysteinyl-[SoxY protein] + thiosulfate + 2 Fe(III)-[cytochrome c] = S-(2-sulfodisulfanyl)-L-cysteinyl-[SoxY protein] + 2 Fe(II)-[cytochrome c] + 2 H(+). C-type diheme cytochrome, which is part of the SoxAX cytochrome complex involved in sulfur oxidation. The SoxAX complex catalyzes the formation of a heterodisulfide bond between the conserved cysteine residue on a sulfur carrier SoxYZ complex subunit SoxY and thiosulfate or other inorganic sulfur substrates. This leads to the liberation of two electrons, which may be transferred from the SoxAX complex to another cytochrome c that then channels them into the respiratory electron transport chain. Some electrons may be used for reductive CO(2) fixation. The chain is L-cysteine S-thiosulfotransferase subunit SoxA from Pseudaminobacter salicylatoxidans.